The chain runs to 127 residues: Small ribosomal subunit protein uS12 (127 aa).

Residue aspartate 89 is modified to 3-methylthioaspartic acid. The interval 102–127 (LDTAGVKDRKQGRSKYGTKRPKEAKK) is disordered. The span at 113-127 (GRSKYGTKRPKEAKK) shows a compositional bias: basic residues.

Belongs to the universal ribosomal protein uS12 family. Part of the 30S ribosomal subunit. Contacts proteins S8 and S17. May interact with IF1 in the 30S initiation complex.

With S4 and S5 plays an important role in translational accuracy. In terms of biological role, interacts with and stabilizes bases of the 16S rRNA that are involved in tRNA selection in the A site and with the mRNA backbone. Located at the interface of the 30S and 50S subunits, it traverses the body of the 30S subunit contacting proteins on the other side and probably holding the rRNA structure together. The combined cluster of proteins S8, S12 and S17 appears to hold together the shoulder and platform of the 30S subunit. The chain is Small ribosomal subunit protein uS12 from Nostoc punctiforme (strain ATCC 29133 / PCC 73102).